A 187-amino-acid polypeptide reads, in one-letter code: Cerebral dopamine neurotrophic factor (187 aa).

Positions 1 to 24 (MRCISPTALVTFCAGFCISNPVLA) are cleaved as a signal peptide. 3 cysteine pairs are disulfide-bonded: Cys37–Cys124, Cys40–Cys113, and Cys71–Cys82.

This sequence belongs to the ARMET family. Expressed at high levels in the heart, skeletal muscle, testis and brain (at protein level). In the brain, detected in the cerebral cortex neurons through layers II to VI. In the hippocampus, detected in the CA1 to CA3 pyramidal regions and in the granule and polymorph layers of dentate gyrus. Weak expression in the striatum. In substantia nigra, detected in solitary cells that did not express tyrosine hydroxylase, a marker for dopaminergic neurons. Relatively high expression in the Purkinje cells of the cerebellum and in regions of the brain stem, including the locus coeruleus.

The protein localises to the secreted. Functionally, trophic factor for dopamine neurons. Prevents the 6-hydroxydopamine (6-OHDA)-induced degeneration of dopaminergic neurons. When administered after 6-OHDA-lesioning, restores the dopaminergic function and prevents the degeneration of dopaminergic neurons in substantia nigra. The polypeptide is Cerebral dopamine neurotrophic factor (Cdnf) (Mus musculus (Mouse)).